A 218-amino-acid polypeptide reads, in one-letter code: MGQKINPLGFRLGTTQSHHSFWFAKPKNFSIGLQEDERIRNCIKDYVKKNKKISSGFEGIAYIGIQKRIDFIQVIIYIGFPNLLIEGRTRGVEELQMNVQKEFHSVNRRLNIAITRIEKPYGQPNILAEYIALQLKNRVSFRKAMKKAIELTEQTGTKGIQVQIAGRIDGKEIARVEWIREGRVPLQTIRAKIDHCSHTVRTIYGILGIKIWIFVNQE.

The 76-residue stretch at I43–E118 folds into the KH type-2 domain.

The protein belongs to the universal ribosomal protein uS3 family. As to quaternary structure, part of the 30S ribosomal subunit.

The protein localises to the plastid. It localises to the chloroplast. In Phalaenopsis aphrodite subsp. formosana (Moth orchid), this protein is Small ribosomal subunit protein uS3c (rps3).